The following is a 340-amino-acid chain: MKKVAIVGIRGYSGLELFRIFYYHPEVEVTKIYATSHYGEKLSEHFPQLEGLTDLTISEFNEEEIMAECDAVFFATSAGVSQKLALTFIDNNFPVIDLSGDFRLADLEIYNKWYKNTNLKNEYLLSGQYNLADIGQAKANYIANPGCYATATLLALYPLVKNKMIDLDSIIVDAKSGLSGAGKGLSDASHFVNVVDNMSMYKINSHQHIPEIAQQLKIWNSNFQALQFSTSLIPVSRGIFVSSYAKVAADFDFETIKNAYEQVYATKNFVRIRRQMPHLSDVIGTNFCDIGLAYNPVTNVLSVVSVIDNLMKGAAGQAVQNFNQLFGYDESLGLKFMPSL.

C147 is an active-site residue.

This sequence belongs to the NAGSA dehydrogenase family. Type 1 subfamily.

It is found in the cytoplasm. It catalyses the reaction N-acetyl-L-glutamate 5-semialdehyde + phosphate + NADP(+) = N-acetyl-L-glutamyl 5-phosphate + NADPH + H(+). It functions in the pathway amino-acid biosynthesis; L-arginine biosynthesis; N(2)-acetyl-L-ornithine from L-glutamate: step 3/4. Catalyzes the NADPH-dependent reduction of N-acetyl-5-glutamyl phosphate to yield N-acetyl-L-glutamate 5-semialdehyde. The sequence is that of N-acetyl-gamma-glutamyl-phosphate reductase from Lactococcus lactis subsp. lactis (strain IL1403) (Streptococcus lactis).